Here is a 266-residue protein sequence, read N- to C-terminus: Glioma pathogenesis-related protein 1 (266 aa).

A signal peptide spans 1-21 (MRVTLATIAWMVSFVSNYSHT). Positions 38–175 (VRIHNKFRSE…SNGAHFICNY (138 aa)) constitute an SCP domain. The chain crosses the membrane as a helical span at residues 233-255 (YTSLFLIVNSVILILSVIITILV).

It belongs to the CRISP family. In terms of tissue distribution, according to PubMed:8973356, it is ubiquitously expressed with high levels in lung and kidney and low levels in heart and liver. Highly expressed in cell lines derived from nervous system tumors arising from glia, low or absent in non-glial-derived nervous system tumor cell lines. Also found in fetal kidney. According to PubMed:7607567 it is expressed only in brain tumor glioblastoma multiforme/astrocytoma and not in other nervous system tumors or normal fetal or adult tissues.

The protein resides in the membrane. The chain is Glioma pathogenesis-related protein 1 (GLIPR1) from Homo sapiens (Human).